A 318-amino-acid polypeptide reads, in one-letter code: Lymphatic vessel endothelial hyaluronic acid receptor 1 (318 aa).

A signal peptide spans 1-23; the sequence is MLQHTSLVLLLASIWTTRHPVQG. The Extracellular segment spans residues 24–234; sequence ADLVQDLSIS…EAAGFGGVPT (211 aa). Residues 39 to 129 form the Link domain; that stretch reads GVALVGRNKN…SQKFKAYCHN (91 aa). N-linked (GlcNAc...) asparagine glycosylation occurs at asparagine 52. 2 disulfide bridges follow: cysteine 60–cysteine 127 and cysteine 84–cysteine 105. Asparagine 129 carries an N-linked (GlcNAc...) asparagine glycan. Residues 235–255 traverse the membrane as a helical segment; the sequence is ALLVLALLFFGAAAVLAVCYV. At 256 to 318 the chain is on the cytoplasmic side; it reads KRYVKAFPFT…TTVRCLEAEV (63 aa). The segment covering 284 to 305 has biased composition (basic and acidic residues); that stretch reads ADDVNANEESKKTIKNPEEAKS. Residues 284–318 form a disordered region; it reads ADDVNANEESKKTIKNPEEAKSPPKTTVRCLEAEV.

As to quaternary structure, homodimer; disulfide-linked. Interacts with PDGFB and IGFBP3. Forms a transient ternary complex with PDGFB and PDGFRB in TGN. In terms of processing, O-glycosylated.

The protein resides in the membrane. Functionally, ligand-specific transporter trafficking between intracellular organelles (TGN) and the plasma membrane. Plays a role in autocrine regulation of cell growth mediated by growth regulators containing cell surface retention sequence binding (CRS). May act as a hyaluronan (HA) transporter, either mediating its uptake for catabolism within lymphatic endothelial cells themselves, or its transport into the lumen of afferent lymphatic vessels for subsequent re-uptake and degradation in lymph nodes. Binds to pericelluar hyaluronan matrices deposited on the surface of leukocytes and facilitates cell adhesion and migration through lymphatic endothelium. In Mus musculus (Mouse), this protein is Lymphatic vessel endothelial hyaluronic acid receptor 1 (Lyve1).